The sequence spans 36 residues: Photosystem II reaction center protein M (36 aa).

A helical transmembrane segment spans residues 7–27 (GFVASLMFVLVPTVFLIVLFI).

Belongs to the PsbM family. In terms of assembly, PSII is composed of 1 copy each of membrane proteins PsbA, PsbB, PsbC, PsbD, PsbE, PsbF, PsbH, PsbI, PsbJ, PsbK, PsbL, PsbM, PsbT, PsbX, PsbY, PsbZ, Psb30/Ycf12, peripheral proteins PsbO, CyanoQ (PsbQ), PsbU, PsbV and a large number of cofactors. It forms dimeric complexes.

Its subcellular location is the cellular thylakoid membrane. In terms of biological role, one of the components of the core complex of photosystem II (PSII). PSII is a light-driven water:plastoquinone oxidoreductase that uses light energy to abstract electrons from H(2)O, generating O(2) and a proton gradient subsequently used for ATP formation. It consists of a core antenna complex that captures photons, and an electron transfer chain that converts photonic excitation into a charge separation. This subunit is found at the monomer-monomer interface. The protein is Photosystem II reaction center protein M of Synechococcus sp. (strain CC9311).